The sequence spans 417 residues: Lipoyl synthase, mitochondrial (417 aa).

Residues 35 to 56 (EANPTDLAGLKRKAKRRPTKLA) are disordered. Basic residues predominate over residues 44–53 (LKRKAKRRPT). Residues C122, C127, C133, C152, C156, C159, and S367 each coordinate [4Fe-4S] cluster. The 220-residue stretch at 137 to 356 (KKSEATATIM…RDKALEMGFL (220 aa)) folds into the Radical SAM core domain. Positions 389–417 (IEEQQHDKENNNLLLSKEDEKTTQEKANF) are disordered. The span at 391–417 (EQQHDKENNNLLLSKEDEKTTQEKANF) shows a compositional bias: basic and acidic residues.

Belongs to the radical SAM superfamily. Lipoyl synthase family. [4Fe-4S] cluster serves as cofactor.

The protein resides in the mitochondrion. It carries out the reaction [[Fe-S] cluster scaffold protein carrying a second [4Fe-4S](2+) cluster] + N(6)-octanoyl-L-lysyl-[protein] + 2 oxidized [2Fe-2S]-[ferredoxin] + 2 S-adenosyl-L-methionine + 4 H(+) = [[Fe-S] cluster scaffold protein] + N(6)-[(R)-dihydrolipoyl]-L-lysyl-[protein] + 4 Fe(3+) + 2 hydrogen sulfide + 2 5'-deoxyadenosine + 2 L-methionine + 2 reduced [2Fe-2S]-[ferredoxin]. Its pathway is protein modification; protein lipoylation via endogenous pathway; protein N(6)-(lipoyl)lysine from octanoyl-[acyl-carrier-protein]: step 2/2. Catalyzes the radical-mediated insertion of two sulfur atoms into the C-6 and C-8 positions of the octanoyl moiety bound to the lipoyl domains of lipoate-dependent enzymes, thereby converting the octanoylated domains into lipoylated derivatives. The sequence is that of Lipoyl synthase, mitochondrial from Komagataella phaffii (strain GS115 / ATCC 20864) (Yeast).